The chain runs to 325 residues: Glutarate 2-hydroxylase (325 aa).

Residues H160, D162, and H292 each contribute to the Fe cation site.

This sequence belongs to the glutarate hydroxylase family. In terms of assembly, homotetramer. Fe(2+) serves as cofactor.

The catalysed reaction is glutarate + 2-oxoglutarate + O2 = (S)-2-hydroxyglutarate + succinate + CO2. The protein operates within amino-acid degradation. In terms of biological role, acts as an alpha-ketoglutarate-dependent dioxygenase catalyzing hydroxylation of glutarate (GA) to L-2-hydroxyglutarate (L2HG). Functions in a L-lysine degradation pathway that proceeds via cadaverine, glutarate and L-2-hydroxyglutarate. This Escherichia coli O17:K52:H18 (strain UMN026 / ExPEC) protein is Glutarate 2-hydroxylase.